Reading from the N-terminus, the 185-residue chain is Alkyl hydroperoxide reductase AhpD (185 aa).

Residue cysteine 131 is the Proton donor of the active site. Cysteine 131 and cysteine 134 are joined by a disulfide. Cysteine 134 (cysteine sulfenic acid (-SOH) intermediate) is an active-site residue.

Belongs to the AhpD family. Homotrimer.

It carries out the reaction N(6)-[(R)-dihydrolipoyl]-L-lysyl-[lipoyl-carrier protein] + a hydroperoxide = N(6)-[(R)-lipoyl]-L-lysyl-[lipoyl-carrier protein] + an alcohol + H2O. Functionally, antioxidant protein with alkyl hydroperoxidase activity. Required for the reduction of the AhpC active site cysteine residues and for the regeneration of the AhpC enzyme activity. This is Alkyl hydroperoxide reductase AhpD from Frankia alni (strain DSM 45986 / CECT 9034 / ACN14a).